The chain runs to 551 residues: Intestinal-type alkaline phosphatase 2 (551 aa).

Positions 1-19 (MQGAWVLLLLGFRLQLSLS) are cleaved as a signal peptide. Residue D61 participates in Mg(2+) binding. D61 and S111 together coordinate Zn(2+). S111 serves as the catalytic Phosphoserine intermediate. C140 and C202 are disulfide-bonded. N141 is a glycosylation site (N-linked (GlcNAc...) asparagine). Mg(2+) is bound at residue S174. A Ca(2+)-binding site is contributed by E235. N241 carries N-linked (GlcNAc...) asparagine glycosylation. The Ca(2+) site is built by F288, E289, and D304. A Mg(2+)-binding site is contributed by E330. D335, H339, D376, and H377 together coordinate Zn(2+). A glycan (N-linked (GlcNAc...) asparagine) is linked at N426. C485 and C492 form a disulfide bridge. Residues 496 to 537 (PPADENRPTTPVQNSTTTTTTTTTTTTTTTTTRVQNSASSLG) form a disordered region. N509 carries an N-linked (GlcNAc...) asparagine glycan. A compositionally biased stretch (low complexity) spans 511–527 (TTTTTTTTTTTTTTTTT). The span at 528-537 (RVQNSASSLG) shows a compositional bias: polar residues. Residue N531 is the site of GPI-anchor amidated asparagine attachment. Positions 532-551 (SASSLGPATAPLAWHYWPRR) are cleaved as a propeptide — removed in mature form.

This sequence belongs to the alkaline phosphatase family. In terms of assembly, homodimer. Mg(2+) is required as a cofactor. The cofactor is Zn(2+). Requires Ca(2+) as cofactor.

It is found in the cell membrane. It carries out the reaction a phosphate monoester + H2O = an alcohol + phosphate. Functionally, alkaline phosphatase that can hydrolyze various phosphate compounds. The chain is Intestinal-type alkaline phosphatase 2 from Rattus norvegicus (Rat).